A 243-amino-acid polypeptide reads, in one-letter code: DNA repair protein RecO (243 aa).

This sequence belongs to the RecO family.

In terms of biological role, involved in DNA repair and RecF pathway recombination. The chain is DNA repair protein RecO from Xylella fastidiosa (strain M12).